Consider the following 332-residue polypeptide: Probable electron transfer flavoprotein subunit alpha, mitochondrial (332 aa).

Residue 275–303 (LYIAIGISGAIQHLAGMKDSKVIVAINKD) coordinates FAD.

It belongs to the ETF alpha-subunit/FixB family. As to quaternary structure, heterodimer of an alpha and a beta subunit. Requires FAD as cofactor.

The protein localises to the mitochondrion matrix. In terms of biological role, the electron transfer flavoprotein serves as a specific electron acceptor for several dehydrogenases, including five acyl-CoA dehydrogenases, glutaryl-CoA and sarcosine dehydrogenase. It transfers the electrons to the main mitochondrial respiratory chain via ETF-ubiquinone oxidoreductase (ETF dehydrogenase). This is Probable electron transfer flavoprotein subunit alpha, mitochondrial from Caenorhabditis elegans.